The chain runs to 575 residues: Alpha-(1,6)-fucosyltransferase (575 aa).

Topologically, residues 1 to 9 (MRPWTGSWR) are cytoplasmic. A helical; Signal-anchor for type II membrane protein transmembrane segment spans residues 10-30 (WIMLILFAWGTLLFYIGGHLV). The Lumenal portion of the chain corresponds to 31–575 (RDNDHPDHSS…KYPTYPEAEK (545 aa)). Intrachain disulfides connect cysteine 204/cysteine 266, cysteine 212/cysteine 230, and cysteine 218/cysteine 222. The region spanning 206–493 (KAKKLVCNIN…PDASANFHSL (288 aa)) is the GT23 domain. Serine 278 carries the phosphoserine modification. The SH3-binding signature appears at 299–305 (PRPPYLP). The segment at 365–366 (RR) is important for donor substrate binding. A disulfide bond links cysteine 465 and cysteine 472. The region spanning 502–563 (QNAHNQIAIY…PSYKVREKIE (62 aa)) is the SH3 domain.

This sequence belongs to the glycosyltransferase 23 family. In terms of processing, tyrosine phosphorylated by PKDCC/VLK.

The protein resides in the golgi apparatus. The protein localises to the golgi stack membrane. It carries out the reaction N(4)-{beta-D-GlcNAc-(1-&gt;2)-alpha-D-Man-(1-&gt;3)-[beta-D-GlcNAc-(1-&gt;2)-alpha-D-Man-(1-&gt;6)]-beta-D-Man-(1-&gt;4)-beta-D-GlcNAc-(1-&gt;4)-beta-D-GlcNAc}-L-asparaginyl-[protein] + GDP-beta-L-fucose = an N(4)-{beta-D-GlcNAc-(1-&gt;2)-alpha-D-Man-(1-&gt;3)-[beta-D-GlcNAc-(1-&gt;2)-alpha-D-Man-(1-&gt;6)]-beta-D-Man-(1-&gt;4)-beta-D-GlcNAc-(1-&gt;4)-[alpha-L-Fuc-(1-&gt;6)]-beta-D-GlcNAc}-L-asparaginyl-[protein] + GDP + H(+). It functions in the pathway protein modification; protein glycosylation. In terms of biological role, catalyzes the addition of fucose in alpha 1-6 linkage to the first GlcNAc residue, next to the peptide chains in N-glycans. This Homo sapiens (Human) protein is Alpha-(1,6)-fucosyltransferase (FUT8).